The chain runs to 167 residues: Bacterioferritin (167 aa).

The Ferritin-like diiron domain maps to 1–145 (MQGDPEVIEF…TQLDLIEKLG (145 aa)). Glu-18 and Glu-51 together coordinate Fe cation. Position 52 (Met-52) interacts with heme b. Fe cation is bound by residues His-54, Glu-94, Glu-127, and His-130.

This sequence belongs to the bacterioferritin family. In terms of assembly, homooligomer of 24 subunits, arranged as 12 dimers, that are packed together to form an approximately spherical molecule with a central cavity, in which large amounts of iron can be deposited. Requires heme b as cofactor.

It catalyses the reaction 4 Fe(2+) + O2 + 4 H(+) = 4 Fe(3+) + 2 H2O. The catalysed reaction is Fe(2+)(in) = Fe(2+)(out). Iron-storage protein, whose ferroxidase center binds Fe(2+), oxidizes it using dioxygen to Fe(3+), and participates in the subsequent Fe(3+) oxide mineral core formation within the central cavity of the BFR protein shell. In Streptomyces coelicolor (strain ATCC BAA-471 / A3(2) / M145), this protein is Bacterioferritin (bfr).